A 306-amino-acid polypeptide reads, in one-letter code: uncharacterized protein (306 aa).

Residues 40-156 (HETCSTPGED…AVASASAPTE (117 aa)) form a disordered region. A compositionally biased stretch (low complexity) spans 64–73 (EGINLGEEGL). Residues 129-139 (KQHKKAKKRKS) are compositionally biased toward basic residues.

This is an uncharacterized protein from Rattus norvegicus (Rat).